The sequence spans 390 residues: 8-amino-7-oxononanoate synthase (390 aa).

Arginine 19 serves as a coordination point for substrate. 106 to 107 provides a ligand contact to pyridoxal 5'-phosphate; that stretch reads GY. Histidine 131 is a binding site for substrate. Positions 176, 204, and 233 each coordinate pyridoxal 5'-phosphate. An N6-(pyridoxal phosphate)lysine modification is found at lysine 236. Position 350 (threonine 350) interacts with substrate.

This sequence belongs to the class-II pyridoxal-phosphate-dependent aminotransferase family. BioF subfamily. As to quaternary structure, homodimer. Pyridoxal 5'-phosphate serves as cofactor.

The catalysed reaction is 6-carboxyhexanoyl-[ACP] + L-alanine + H(+) = (8S)-8-amino-7-oxononanoate + holo-[ACP] + CO2. Its pathway is cofactor biosynthesis; biotin biosynthesis. In terms of biological role, catalyzes the decarboxylative condensation of pimeloyl-[acyl-carrier protein] and L-alanine to produce 8-amino-7-oxononanoate (AON), [acyl-carrier protein], and carbon dioxide. The protein is 8-amino-7-oxononanoate synthase of Pseudomonas putida (strain ATCC 700007 / DSM 6899 / JCM 31910 / BCRC 17059 / LMG 24140 / F1).